The primary structure comprises 333 residues: Ketol-acid reductoisomerase (NADP(+)) (333 aa).

A KARI N-terminal Rossmann domain is found at 1–171; that stretch reads MSNHTQPKIA…GGARANIIKT (171 aa). NADP(+) contacts are provided by residues 14–17, Arg37, Thr42, and 72–75; these read YGSQ and DMVQ. His97 is an active-site residue. Gly123 is a binding site for NADP(+). In terms of domain architecture, KARI C-terminal knotted spans 172–317; it reads TFKEETETDL…KKLRAKMVWL (146 aa). Residues Asp180, Glu184, Glu216, and Glu220 each coordinate Mg(2+). Residue Ser241 participates in substrate binding.

The protein belongs to the ketol-acid reductoisomerase family. The cofactor is Mg(2+).

It catalyses the reaction (2R)-2,3-dihydroxy-3-methylbutanoate + NADP(+) = (2S)-2-acetolactate + NADPH + H(+). The enzyme catalyses (2R,3R)-2,3-dihydroxy-3-methylpentanoate + NADP(+) = (S)-2-ethyl-2-hydroxy-3-oxobutanoate + NADPH + H(+). It functions in the pathway amino-acid biosynthesis; L-isoleucine biosynthesis; L-isoleucine from 2-oxobutanoate: step 2/4. It participates in amino-acid biosynthesis; L-valine biosynthesis; L-valine from pyruvate: step 2/4. In terms of biological role, involved in the biosynthesis of branched-chain amino acids (BCAA). Catalyzes an alkyl-migration followed by a ketol-acid reduction of (S)-2-acetolactate (S2AL) to yield (R)-2,3-dihydroxy-isovalerate. In the isomerase reaction, S2AL is rearranged via a Mg-dependent methyl migration to produce 3-hydroxy-3-methyl-2-ketobutyrate (HMKB). In the reductase reaction, this 2-ketoacid undergoes a metal-dependent reduction by NADPH to yield (R)-2,3-dihydroxy-isovalerate. In Xanthomonas axonopodis pv. citri (strain 306), this protein is Ketol-acid reductoisomerase (NADP(+)).